Here is a 272-residue protein sequence, read N- to C-terminus: Ras-related protein RSR1 (272 aa).

A GTP-binding site is contributed by 10 to 17 (GAGGVGKS). An Effector region motif is present at residues 32–40 (YDPTIEDSY). GTP contacts are provided by residues 57-61 (DTAGI) and 116-119 (NKAD). Positions 177 to 272 (DARNQSQQFS…KKNASTCTIL (96 aa)) are disordered. 2 stretches are compositionally biased toward polar residues: residues 180–232 (NQSQ…STPV) and 245–258 (SGSS…ATSQ). Position 269 is a cysteine methyl ester (cysteine 269). A lipid anchor (S-geranylgeranyl cysteine) is attached at cysteine 269. Residues 270–272 (TIL) constitute a propeptide, removed in mature form.

It belongs to the small GTPase superfamily. Ras family.

The protein resides in the cell membrane. The enzyme catalyses GTP + H2O = GDP + phosphate + H(+). Alternates between an inactive form bound to GDP and an active form bound to GTP. Activated by a guanine nucleotide-exchange factor (GEF) and inactivated by a GTPase-activating protein (GAP). Functionally, ras-related protein which binds GDP/GTP and possesses intrinsic GTPase activity. Involved in development of cell polarity during the cell division cycle, and essential for bud emergence. In Saccharomyces cerevisiae (strain ATCC 204508 / S288c) (Baker's yeast), this protein is Ras-related protein RSR1.